The chain runs to 671 residues: Acetyl-coenzyme A synthetase 1 (671 aa).

Residues 210 to 213 (RGGK) and Thr-329 each bind CoA. ATP-binding positions include 405 to 407 (GEP), 429 to 434 (DTYWQT), Asp-520, and Arg-535. Ser-543 contributes to the CoA binding site. Arg-546 contacts ATP. Residue Arg-605 participates in CoA binding.

Belongs to the ATP-dependent AMP-binding enzyme family.

It carries out the reaction acetate + ATP + CoA = acetyl-CoA + AMP + diphosphate. This is Acetyl-coenzyme A synthetase 1 (ACS1) from Debaryomyces hansenii (strain ATCC 36239 / CBS 767 / BCRC 21394 / JCM 1990 / NBRC 0083 / IGC 2968) (Yeast).